An 81-amino-acid chain; its full sequence is Escargot/snail protein homolog (81 aa).

C2H2-type zinc fingers lie at residues His1–His5, Phe17–His39, Cys43–His65, and Phe71–Ala81.

It belongs to the snail C2H2-type zinc-finger protein family.

The protein localises to the nucleus. This is Escargot/snail protein homolog from Apis mellifera (Honeybee).